A 74-amino-acid chain; its full sequence is Pelophylaxin-2 (74 aa).

A signal peptide spans 1-22 (MFTMKKSLLFFFFLGTIALSLC). Positions 23–42 (EEERGADEEENGAEITDEEV) are excised as a propeptide. A disulfide bridge connects residues C68 and C74.

As to expression, expressed by the skin glands.

Its subcellular location is the secreted. In terms of biological role, antimicrobial peptide. This is Pelophylaxin-2 from Pelophylax fukienensis (Fukien gold-striped pond frog).